Consider the following 619-residue polypeptide: Dihydroxy-acid dehydratase (619 aa).

Residue aspartate 81 participates in Mg(2+) binding. Position 122 (cysteine 122) interacts with [2Fe-2S] cluster. Mg(2+) is bound by residues aspartate 123 and lysine 124. Lysine 124 is subject to N6-carboxylysine. Cysteine 195 contacts [2Fe-2S] cluster. Glutamate 492 lines the Mg(2+) pocket. The active-site Proton acceptor is serine 518.

The protein belongs to the IlvD/Edd family. Homodimer. Requires [2Fe-2S] cluster as cofactor. The cofactor is Mg(2+).

The enzyme catalyses (2R)-2,3-dihydroxy-3-methylbutanoate = 3-methyl-2-oxobutanoate + H2O. The catalysed reaction is (2R,3R)-2,3-dihydroxy-3-methylpentanoate = (S)-3-methyl-2-oxopentanoate + H2O. It functions in the pathway amino-acid biosynthesis; L-isoleucine biosynthesis; L-isoleucine from 2-oxobutanoate: step 3/4. Its pathway is amino-acid biosynthesis; L-valine biosynthesis; L-valine from pyruvate: step 3/4. In terms of biological role, functions in the biosynthesis of branched-chain amino acids. Catalyzes the dehydration of (2R,3R)-2,3-dihydroxy-3-methylpentanoate (2,3-dihydroxy-3-methylvalerate) into 2-oxo-3-methylpentanoate (2-oxo-3-methylvalerate) and of (2R)-2,3-dihydroxy-3-methylbutanoate (2,3-dihydroxyisovalerate) into 2-oxo-3-methylbutanoate (2-oxoisovalerate), the penultimate precursor to L-isoleucine and L-valine, respectively. The chain is Dihydroxy-acid dehydratase from Synechococcus elongatus (strain ATCC 33912 / PCC 7942 / FACHB-805) (Anacystis nidulans R2).